The chain runs to 457 residues: NADP-specific glutamate dehydrogenase (457 aa).

Lys-111 is an active-site residue.

It belongs to the Glu/Leu/Phe/Val dehydrogenases family. Homohexamer.

It carries out the reaction L-glutamate + NADP(+) + H2O = 2-oxoglutarate + NH4(+) + NADPH + H(+). This is NADP-specific glutamate dehydrogenase (gdhA) from Agaricus bisporus (White button mushroom).